Reading from the N-terminus, the 289-residue chain is ATP synthase gamma chain (289 aa).

Belongs to the ATPase gamma chain family. As to quaternary structure, F-type ATPases have 2 components, CF(1) - the catalytic core - and CF(0) - the membrane proton channel. CF(1) has five subunits: alpha(3), beta(3), gamma(1), delta(1), epsilon(1). CF(0) has three main subunits: a, b and c.

It localises to the cell inner membrane. Its function is as follows. Produces ATP from ADP in the presence of a proton gradient across the membrane. The gamma chain is believed to be important in regulating ATPase activity and the flow of protons through the CF(0) complex. This Polynucleobacter asymbioticus (strain DSM 18221 / CIP 109841 / QLW-P1DMWA-1) (Polynucleobacter necessarius subsp. asymbioticus) protein is ATP synthase gamma chain.